The chain runs to 355 residues: MKIAVAMSGGVDSSVAAALLKEQGHEIIGITMQFFAPSCQGAGTPAHDAAVVAAHLGITHHLLDLEHDFRQLIINDFISQYRSGQTPNPCVRCNRFVKFGLLLDAARERGADLLATGHYARTSIDPDGTRHLRVAANLRKDQTYFLHTLSQERLARVVFPLGDIGSKDEVRDLAHRFGLPVAEKGDSQEVCFIPNDDYVSYLEENCALGGETGDIVHVNGRLLGRHRGTHRYTIGQRKGLGIAWSEPLYVVEIDAARKLVVVGEEPHVYAQGLKAEEVGWIIAPGKEEFEASCKIRYRHQPVACRVTLLQGGACRVLFHEPLKAVTPGQSVVFYQDDEVLGGGRITAAIKRDGEA.

ATP contacts are provided by residues 6 to 13 and methionine 32; that span reads AMSGGVDS. Cysteine 93 serves as the catalytic Nucleophile. Residues cysteine 93 and cysteine 191 are joined by a disulfide bond. Glycine 117 contacts ATP. Residues 140–142 form an interaction with tRNA region; the sequence is KDQ. Residue cysteine 191 is the Cysteine persulfide intermediate of the active site. Positions 296–297 are interaction with tRNA; that stretch reads RY.

It belongs to the MnmA/TRMU family.

The protein resides in the cytoplasm. The catalysed reaction is S-sulfanyl-L-cysteinyl-[protein] + uridine(34) in tRNA + AH2 + ATP = 2-thiouridine(34) in tRNA + L-cysteinyl-[protein] + A + AMP + diphosphate + H(+). Functionally, catalyzes the 2-thiolation of uridine at the wobble position (U34) of tRNA, leading to the formation of s(2)U34. This Pelobacter propionicus (strain DSM 2379 / NBRC 103807 / OttBd1) protein is tRNA-specific 2-thiouridylase MnmA.